Reading from the N-terminus, the 250-residue chain is uncharacterized protein (250 aa).

The chain crosses the membrane as a helical span at residues 2-22 (ILRIIIFVIIILVVSLLLIYF).

It is found in the membrane. This is an uncharacterized protein from Acanthamoeba polyphaga (Amoeba).